Here is a 520-residue protein sequence, read N- to C-terminus: GMP synthase [glutamine-hydrolyzing] (520 aa).

The region spanning 3–200 (AIAIIDFGSQ…FLDIANCKRD (198 aa)) is the Glutamine amidotransferase type-1 domain. C84 (nucleophile) is an active-site residue. Residues H175 and E177 contribute to the active site. The 186-residue stretch at 201 to 386 (WTMKSIIEKQ…IGLSNEIIFQ (186 aa)) folds into the GMPS ATP-PPase domain. 228–234 (SGGVDSS) is a binding site for ATP.

In terms of assembly, homodimer.

It catalyses the reaction XMP + L-glutamine + ATP + H2O = GMP + L-glutamate + AMP + diphosphate + 2 H(+). It participates in purine metabolism; GMP biosynthesis; GMP from XMP (L-Gln route): step 1/1. Catalyzes the synthesis of GMP from XMP. The sequence is that of GMP synthase [glutamine-hydrolyzing] from Wolbachia sp. subsp. Brugia malayi (strain TRS).